Here is a 143-residue protein sequence, read N- to C-terminus: Large ribosomal subunit protein uL11 (143 aa).

It belongs to the universal ribosomal protein uL11 family. Part of the ribosomal stalk of the 50S ribosomal subunit. Interacts with L10 and the large rRNA to form the base of the stalk. L10 forms an elongated spine to which L12 dimers bind in a sequential fashion forming a multimeric L10(L12)X complex. Post-translationally, one or more lysine residues are methylated.

Functionally, forms part of the ribosomal stalk which helps the ribosome interact with GTP-bound translation factors. The sequence is that of Large ribosomal subunit protein uL11 from Thioalkalivibrio sulfidiphilus (strain HL-EbGR7).